The sequence spans 335 residues: 4-hydroxy-3-methylbut-2-enyl diphosphate reductase (335 aa).

[4Fe-4S] cluster is bound at residue Cys-14. Residues His-43 and His-81 each coordinate (2E)-4-hydroxy-3-methylbut-2-enyl diphosphate. Residues His-43 and His-81 each coordinate dimethylallyl diphosphate. Positions 43 and 81 each coordinate isopentenyl diphosphate. Cys-103 is a binding site for [4Fe-4S] cluster. His-132 provides a ligand contact to (2E)-4-hydroxy-3-methylbut-2-enyl diphosphate. His-132 contributes to the dimethylallyl diphosphate binding site. His-132 contributes to the isopentenyl diphosphate binding site. Glu-134 (proton donor) is an active-site residue. Thr-179 provides a ligand contact to (2E)-4-hydroxy-3-methylbut-2-enyl diphosphate. Position 209 (Cys-209) interacts with [4Fe-4S] cluster. Ser-237, Ser-238, Asn-239, and Ser-285 together coordinate (2E)-4-hydroxy-3-methylbut-2-enyl diphosphate. Ser-237, Ser-238, Asn-239, and Ser-285 together coordinate dimethylallyl diphosphate. Ser-237, Ser-238, Asn-239, and Ser-285 together coordinate isopentenyl diphosphate.

Belongs to the IspH family. Requires [4Fe-4S] cluster as cofactor.

It carries out the reaction isopentenyl diphosphate + 2 oxidized [2Fe-2S]-[ferredoxin] + H2O = (2E)-4-hydroxy-3-methylbut-2-enyl diphosphate + 2 reduced [2Fe-2S]-[ferredoxin] + 2 H(+). The catalysed reaction is dimethylallyl diphosphate + 2 oxidized [2Fe-2S]-[ferredoxin] + H2O = (2E)-4-hydroxy-3-methylbut-2-enyl diphosphate + 2 reduced [2Fe-2S]-[ferredoxin] + 2 H(+). The protein operates within isoprenoid biosynthesis; dimethylallyl diphosphate biosynthesis; dimethylallyl diphosphate from (2E)-4-hydroxy-3-methylbutenyl diphosphate: step 1/1. It participates in isoprenoid biosynthesis; isopentenyl diphosphate biosynthesis via DXP pathway; isopentenyl diphosphate from 1-deoxy-D-xylulose 5-phosphate: step 6/6. Functionally, catalyzes the conversion of 1-hydroxy-2-methyl-2-(E)-butenyl 4-diphosphate (HMBPP) into a mixture of isopentenyl diphosphate (IPP) and dimethylallyl diphosphate (DMAPP). Acts in the terminal step of the DOXP/MEP pathway for isoprenoid precursor biosynthesis. The chain is 4-hydroxy-3-methylbut-2-enyl diphosphate reductase from Deinococcus radiodurans (strain ATCC 13939 / DSM 20539 / JCM 16871 / CCUG 27074 / LMG 4051 / NBRC 15346 / NCIMB 9279 / VKM B-1422 / R1).